The sequence spans 206 residues: Recombination protein RecR (206 aa).

Residues 58–73 (CENCHNISDTKVCEIC) form a C4-type zinc finger. In terms of domain architecture, Toprim spans 81–176 (QTICVVEDIR…IISTIARGIS (96 aa)).

This sequence belongs to the RecR family.

In terms of biological role, may play a role in DNA repair. It seems to be involved in an RecBC-independent recombinational process of DNA repair. It may act with RecF and RecO. This Flavobacterium johnsoniae (strain ATCC 17061 / DSM 2064 / JCM 8514 / BCRC 14874 / CCUG 350202 / NBRC 14942 / NCIMB 11054 / UW101) (Cytophaga johnsonae) protein is Recombination protein RecR.